The chain runs to 104 residues: L-rhamnose mutarotase (104 aa).

A substrate-binding site is contributed by Tyr-18. His-22 functions as the Proton donor in the catalytic mechanism. Residues Tyr-41 and 76–77 each bind substrate; that span reads WW.

This sequence belongs to the rhamnose mutarotase family. In terms of assembly, homodimer.

It localises to the cytoplasm. The enzyme catalyses alpha-L-rhamnose = beta-L-rhamnose. Its pathway is carbohydrate metabolism; L-rhamnose metabolism. Functionally, involved in the anomeric conversion of L-rhamnose. This chain is L-rhamnose mutarotase, found in Lachnoclostridium phytofermentans (strain ATCC 700394 / DSM 18823 / ISDg) (Clostridium phytofermentans).